We begin with the raw amino-acid sequence, 208 residues long: Uracil phosphoribosyltransferase (208 aa).

5-phospho-alpha-D-ribose 1-diphosphate-binding positions include R78, R103, and 130 to 138 (DPMLATGGS). Uracil-binding positions include I193 and 198–200 (GDA). Residue D199 coordinates 5-phospho-alpha-D-ribose 1-diphosphate.

The protein belongs to the UPRTase family. It depends on Mg(2+) as a cofactor.

It catalyses the reaction UMP + diphosphate = 5-phospho-alpha-D-ribose 1-diphosphate + uracil. It functions in the pathway pyrimidine metabolism; UMP biosynthesis via salvage pathway; UMP from uracil: step 1/1. Allosterically activated by GTP. Catalyzes the conversion of uracil and 5-phospho-alpha-D-ribose 1-diphosphate (PRPP) to UMP and diphosphate. The chain is Uracil phosphoribosyltransferase from Sodalis glossinidius (strain morsitans).